The primary structure comprises 365 residues: Parathion hydrolase (365 aa).

The segment at residues 1 to 29 (MQTRRVVLKSAAAAGTLLGGLAGCASVAG) is a signal peptide (tat-type signal). H55, H57, K169, H201, H230, and D301 together coordinate Zn(2+). N6-carboxylysine is present on K169.

This sequence belongs to the metallo-dependent hydrolases superfamily. Phosphotriesterase family. As to quaternary structure, homodimer. Requires Zn(2+) as cofactor. Predicted to be exported by the Tat system. The position of the signal peptide cleavage has been experimentally proven.

The protein resides in the cell membrane. The catalysed reaction is An aryl dialkyl phosphate + H2O = dialkyl phosphate + an aryl alcohol.. In terms of biological role, has an unusual substrate specificity for synthetic organophosphate triesters and phosphorofluoridates. All of the phosphate triesters found to be substrates are synthetic compounds. The identity of any naturally occurring substrate for the enzyme is unknown. Has no detectable activity with phosphate monoesters or diesters and no activity as an esterase or protease. It catalyzes the hydrolysis of the insecticide paraoxon at a rate approaching the diffusion limit and thus appears to be optimally evolved for utilizing this synthetic substrate. In Brevundimonas diminuta (Pseudomonas diminuta), this protein is Parathion hydrolase (opd).